Consider the following 443-residue polypeptide: Ribosomal protein uS12 methylthiotransferase RimO (443 aa).

One can recognise an MTTase N-terminal domain in the interval 8–118 (PKVGFVSLGC…VVNAVHEVVP (111 aa)). [4Fe-4S] cluster is bound by residues Cys17, Cys53, Cys82, Cys151, Cys155, and Cys158. The region spanning 137-375 (LTPRHYAYLK…MAHQQAISAA (239 aa)) is the Radical SAM core domain. A TRAM domain is found at 378–443 (QQRIGKEIEV…DEYDMWAEPI (66 aa)).

This sequence belongs to the methylthiotransferase family. RimO subfamily. It depends on [4Fe-4S] cluster as a cofactor.

The protein localises to the cytoplasm. It carries out the reaction L-aspartate(89)-[ribosomal protein uS12]-hydrogen + (sulfur carrier)-SH + AH2 + 2 S-adenosyl-L-methionine = 3-methylsulfanyl-L-aspartate(89)-[ribosomal protein uS12]-hydrogen + (sulfur carrier)-H + 5'-deoxyadenosine + L-methionine + A + S-adenosyl-L-homocysteine + 2 H(+). In terms of biological role, catalyzes the methylthiolation of an aspartic acid residue of ribosomal protein uS12. The polypeptide is Ribosomal protein uS12 methylthiotransferase RimO (Pseudomonas entomophila (strain L48)).